The primary structure comprises 660 residues: tRNA 5-methylaminomethyl-2-thiouridine biosynthesis bifunctional protein MnmC (660 aa).

Residues 1 to 233 (MTHSHAQLVW…KRHISHGWIA (233 aa)) form a tRNA (mnm(5)s(2)U34)-methyltransferase region. The interval 260 to 660 (VGGGLAGAAS…IRRKLDPDAL (401 aa)) is FAD-dependent cmnm(5)s(2)U34 oxidoreductase.

In the N-terminal section; belongs to the methyltransferase superfamily. tRNA (mnm(5)s(2)U34)-methyltransferase family. This sequence in the C-terminal section; belongs to the DAO family. Requires FAD as cofactor.

It localises to the cytoplasm. It carries out the reaction 5-aminomethyl-2-thiouridine(34) in tRNA + S-adenosyl-L-methionine = 5-methylaminomethyl-2-thiouridine(34) in tRNA + S-adenosyl-L-homocysteine + H(+). In terms of biological role, catalyzes the last two steps in the biosynthesis of 5-methylaminomethyl-2-thiouridine (mnm(5)s(2)U) at the wobble position (U34) in tRNA. Catalyzes the FAD-dependent demodification of cmnm(5)s(2)U34 to nm(5)s(2)U34, followed by the transfer of a methyl group from S-adenosyl-L-methionine to nm(5)s(2)U34, to form mnm(5)s(2)U34. This chain is tRNA 5-methylaminomethyl-2-thiouridine biosynthesis bifunctional protein MnmC, found in Chromobacterium violaceum (strain ATCC 12472 / DSM 30191 / JCM 1249 / CCUG 213 / NBRC 12614 / NCIMB 9131 / NCTC 9757 / MK).